A 754-amino-acid polypeptide reads, in one-letter code: Disintegrin and metalloproteinase domain-containing protein 7 (754 aa).

A signal peptide spans 1 to 18 (MLPGCIFLMILLIPQVKE). The propeptide occupies 19–176 (KFILGVEGQQ…NYSCTELNFT (158 aa)). At 19 to 668 (KFILGVEGQQ…ACEETLHVTN (650 aa)) the chain is on the extracellular side. N-linked (GlcNAc...) asparagine glycans are attached at residues asparagine 84, asparagine 167, asparagine 174, and asparagine 184. The 196-residue stretch at 199–394 (KYVELFIVAD…YKPTCMLNIP (196 aa)) folds into the Peptidase M12B domain. Intrachain disulfides connect cysteine 310/cysteine 389, cysteine 350/cysteine 373, cysteine 352/cysteine 357, and cysteine 460/cysteine 480. The region spanning 402 to 488 (FQFCGNKKLD…ACPKDQFRVN (87 aa)) is the Disintegrin domain. Asparagine 584 and asparagine 668 each carry an N-linked (GlcNAc...) asparagine glycan. Residues 669 to 689 (ITILVVVLVLVIVGIGVLILL) traverse the membrane as a helical segment. Residues 690–754 (VRYRKCIKLK…GIADPNQSAK (65 aa)) lie on the Cytoplasmic side of the membrane.

In terms of assembly, interacts with ITM2B in sperm; the interaction increases following capacitation. Interacts with HSPA5 and CANX.

It localises to the membrane. Its function is as follows. Required for normal male fertility via maintenance of epithelial cell morphology in the caput epididymis and subsequently correct epididymis lumen structure required for sperm development. Plays a role in sperm motility, flagella morphology and tyrosine phosphorylation during sperm capacitance. Plays a role in normal expression levels of HSPA5, ITM2B and ADAM2 in sperm both prior to and post-capacitation. This is a non catalytic metalloprotease-like protein. The protein is Disintegrin and metalloproteinase domain-containing protein 7 of Homo sapiens (Human).